The following is a 388-amino-acid chain: 2-methylene-furan-3-one reductase (388 aa).

The transit peptide at 1–60 (MEALLSSTTLQLKPLHPPSSFSSLHSPFSSISVLRVKGSKKAETFIQRSNFSTVLPLRVS) directs the protein to the chloroplast. Residues Lys125, 240–241 (GV), 263–266 (STGK), Tyr281, 330–332 (FVV), and 377–378 (RA) contribute to the NADP(+) site. Lys125 is a substrate binding site.

This sequence belongs to the zinc-containing alcohol dehydrogenase family. Quinone oxidoreductase subfamily. Monomer.

The protein localises to the plastid. The protein resides in the chloroplast. It carries out the reaction 4-hydroxy-2,5-dimethyl-furan-3(2H)-one + NADP(+) = 4-hydroxy-5-methyl-2-methylenefuran-3(2H)-one + NADPH + H(+). In terms of biological role, enone oxidoreductase involved in the biosynthesis of 4-hydroxy-2,5-dimethyl-3(2H)-furanone (HDMF or furaneol). Can use both NADH and NADPH as the electron donor. The sequence is that of 2-methylene-furan-3-one reductase (EO) from Solanum lycopersicum (Tomato).